The sequence spans 626 residues: Chaperone protein HtpG (626 aa).

Residues 1–329 (MSEETLSFQA…SSDLPLNVSR (329 aa)) are a; substrate-binding. The segment at 330–549 (EMLQDDPRLR…EGAMSLHLQK (220 aa)) is b. Residues 550 to 626 (LLRQANQGSE…LTEVMGKGLI (77 aa)) form a c region.

Belongs to the heat shock protein 90 family. Homodimer.

The protein localises to the cytoplasm. Functionally, molecular chaperone. Has ATPase activity. In Rhodospirillum rubrum (strain ATCC 11170 / ATH 1.1.1 / DSM 467 / LMG 4362 / NCIMB 8255 / S1), this protein is Chaperone protein HtpG.